The chain runs to 434 residues: Enolase (434 aa).

Q163 is a binding site for (2R)-2-phosphoglycerate. Residue E205 is the Proton donor of the active site. 3 residues coordinate Mg(2+): D242, E291, and D318. (2R)-2-phosphoglycerate is bound by residues K343, R372, S373, and K394. The active-site Proton acceptor is K343.

This sequence belongs to the enolase family. Mg(2+) serves as cofactor.

Its subcellular location is the cytoplasm. The protein localises to the secreted. It is found in the cell surface. It carries out the reaction (2R)-2-phosphoglycerate = phosphoenolpyruvate + H2O. Its pathway is carbohydrate degradation; glycolysis; pyruvate from D-glyceraldehyde 3-phosphate: step 4/5. In terms of biological role, catalyzes the reversible conversion of 2-phosphoglycerate (2-PG) into phosphoenolpyruvate (PEP). It is essential for the degradation of carbohydrates via glycolysis. The sequence is that of Enolase from Streptococcus thermophilus (strain CNRZ 1066).